We begin with the raw amino-acid sequence, 446 residues long: Bifunctional protein GlmU (446 aa).

The interval 1–226 is pyrophosphorylase; that stretch reads MLAVAILAAG…PDEVNGINDR (226 aa). UDP-N-acetyl-alpha-D-glucosamine contacts are provided by residues 7 to 10, lysine 21, glutamine 73, and 78 to 79; these read LAAG and GT. Aspartate 103 contacts Mg(2+). The UDP-N-acetyl-alpha-D-glucosamine site is built by glycine 140, glutamate 155, asparagine 170, and asparagine 224. Asparagine 224 is a binding site for Mg(2+). Positions 227–247 are linker; the sequence is CQLANCEALLQERLRNYWMKE. The interval 248 to 446 is N-acetyltransferase; sequence GVTFTDPASC…SKQLIKNGWQ (199 aa). Positions 329 and 347 each coordinate UDP-N-acetyl-alpha-D-glucosamine. The active-site Proton acceptor is histidine 359. Tyrosine 362 and asparagine 373 together coordinate UDP-N-acetyl-alpha-D-glucosamine. Residues alanine 376, 382–383, alanine 419, and arginine 436 contribute to the acetyl-CoA site; that span reads NY.

The protein in the N-terminal section; belongs to the N-acetylglucosamine-1-phosphate uridyltransferase family. This sequence in the C-terminal section; belongs to the transferase hexapeptide repeat family. As to quaternary structure, homotrimer. The cofactor is Mg(2+).

The protein resides in the cytoplasm. It carries out the reaction alpha-D-glucosamine 1-phosphate + acetyl-CoA = N-acetyl-alpha-D-glucosamine 1-phosphate + CoA + H(+). The enzyme catalyses N-acetyl-alpha-D-glucosamine 1-phosphate + UTP + H(+) = UDP-N-acetyl-alpha-D-glucosamine + diphosphate. It functions in the pathway nucleotide-sugar biosynthesis; UDP-N-acetyl-alpha-D-glucosamine biosynthesis; N-acetyl-alpha-D-glucosamine 1-phosphate from alpha-D-glucosamine 6-phosphate (route II): step 2/2. The protein operates within nucleotide-sugar biosynthesis; UDP-N-acetyl-alpha-D-glucosamine biosynthesis; UDP-N-acetyl-alpha-D-glucosamine from N-acetyl-alpha-D-glucosamine 1-phosphate: step 1/1. Its pathway is bacterial outer membrane biogenesis; LPS lipid A biosynthesis. In terms of biological role, catalyzes the last two sequential reactions in the de novo biosynthetic pathway for UDP-N-acetylglucosamine (UDP-GlcNAc). The C-terminal domain catalyzes the transfer of acetyl group from acetyl coenzyme A to glucosamine-1-phosphate (GlcN-1-P) to produce N-acetylglucosamine-1-phosphate (GlcNAc-1-P), which is converted into UDP-GlcNAc by the transfer of uridine 5-monophosphate (from uridine 5-triphosphate), a reaction catalyzed by the N-terminal domain. This is Bifunctional protein GlmU from Prochlorococcus marinus (strain MIT 9313).